The sequence spans 390 residues: 23S rRNA (uracil(747)-C(5))-methyltransferase RlmC (390 aa).

The [4Fe-4S] cluster site is built by Cys-12, Cys-20, Cys-23, and Cys-100. The S-adenosyl-L-methionine site is built by Gln-225, Phe-254, Glu-275, and Asn-322. Cys-349 serves as the catalytic Nucleophile.

This sequence belongs to the class I-like SAM-binding methyltransferase superfamily. RNA M5U methyltransferase family. RlmC subfamily.

It carries out the reaction uridine(747) in 23S rRNA + S-adenosyl-L-methionine = 5-methyluridine(747) in 23S rRNA + S-adenosyl-L-homocysteine + H(+). Catalyzes the formation of 5-methyl-uridine at position 747 (m5U747) in 23S rRNA. This chain is 23S rRNA (uracil(747)-C(5))-methyltransferase RlmC, found in Shewanella baltica (strain OS155 / ATCC BAA-1091).